Here is a 339-residue protein sequence, read N- to C-terminus: NADH-quinone oxidoreductase subunit H (339 aa).

A run of 9 helical transmembrane segments spans residues 9–29 (IFPL…LILC), 50–70 (PNVV…KLLF), 82–102 (ILFV…WAVI), 115–135 (VGVL…IIAG), 161–181 (MGLV…SQIV), 187–207 (MPWW…ISVL), 235–255 (MGFA…SAMT), 275–295 (IPGF…FLWI), and 311–331 (GWKV…SVLI).

The protein belongs to the complex I subunit 1 family. NDH-1 is composed of 14 different subunits. Subunits NuoA, H, J, K, L, M, N constitute the membrane sector of the complex.

The protein resides in the cell inner membrane. It catalyses the reaction a quinone + NADH + 5 H(+)(in) = a quinol + NAD(+) + 4 H(+)(out). Its function is as follows. NDH-1 shuttles electrons from NADH, via FMN and iron-sulfur (Fe-S) centers, to quinones in the respiratory chain. The immediate electron acceptor for the enzyme in this species is believed to be ubiquinone. Couples the redox reaction to proton translocation (for every two electrons transferred, four hydrogen ions are translocated across the cytoplasmic membrane), and thus conserves the redox energy in a proton gradient. This subunit may bind ubiquinone. The protein is NADH-quinone oxidoreductase subunit H of Rickettsia bellii (strain RML369-C).